The sequence spans 459 residues: Bifunctional protein GlmU (459 aa).

The interval 1-229 is pyrophosphorylase; the sequence is MSNYAIILAA…FDESLGVNDR (229 aa). Residues 8-11, Lys22, Gln72, and 77-78 contribute to the UDP-N-acetyl-alpha-D-glucosamine site; these read LAAG and GT. Asp102 contributes to the Mg(2+) binding site. Residues Gly139, Glu154, Asn169, and Asn227 each contribute to the UDP-N-acetyl-alpha-D-glucosamine site. Residue Asn227 coordinates Mg(2+). The tract at residues 230 to 250 is linker; it reads VALATAEKVMRHRIARQHMVN. An N-acetyltransferase region spans residues 251–459; it reads GVTVVNPDSA…NKKPHHPSQK (209 aa). Residues Arg332 and Lys350 each coordinate UDP-N-acetyl-alpha-D-glucosamine. The Proton acceptor role is filled by His362. Positions 365 and 376 each coordinate UDP-N-acetyl-alpha-D-glucosamine. Acetyl-CoA is bound by residues Ala379, 385 to 386, Ser404, Ala422, and Arg439; that span reads NY.

In the N-terminal section; belongs to the N-acetylglucosamine-1-phosphate uridyltransferase family. The protein in the C-terminal section; belongs to the transferase hexapeptide repeat family. As to quaternary structure, homotrimer. Mg(2+) serves as cofactor.

It localises to the cytoplasm. It catalyses the reaction alpha-D-glucosamine 1-phosphate + acetyl-CoA = N-acetyl-alpha-D-glucosamine 1-phosphate + CoA + H(+). It carries out the reaction N-acetyl-alpha-D-glucosamine 1-phosphate + UTP + H(+) = UDP-N-acetyl-alpha-D-glucosamine + diphosphate. Its pathway is nucleotide-sugar biosynthesis; UDP-N-acetyl-alpha-D-glucosamine biosynthesis; N-acetyl-alpha-D-glucosamine 1-phosphate from alpha-D-glucosamine 6-phosphate (route II): step 2/2. It participates in nucleotide-sugar biosynthesis; UDP-N-acetyl-alpha-D-glucosamine biosynthesis; UDP-N-acetyl-alpha-D-glucosamine from N-acetyl-alpha-D-glucosamine 1-phosphate: step 1/1. It functions in the pathway bacterial outer membrane biogenesis; LPS lipid A biosynthesis. Its function is as follows. Catalyzes the last two sequential reactions in the de novo biosynthetic pathway for UDP-N-acetylglucosamine (UDP-GlcNAc). The C-terminal domain catalyzes the transfer of acetyl group from acetyl coenzyme A to glucosamine-1-phosphate (GlcN-1-P) to produce N-acetylglucosamine-1-phosphate (GlcNAc-1-P), which is converted into UDP-GlcNAc by the transfer of uridine 5-monophosphate (from uridine 5-triphosphate), a reaction catalyzed by the N-terminal domain. The polypeptide is Bifunctional protein GlmU (Streptococcus agalactiae serotype V (strain ATCC BAA-611 / 2603 V/R)).